The chain runs to 490 residues: Metal cation symporter ZIP14 (490 aa).

The first 28 residues, 1–28 (MELLRPALPSYFLLTLLSIWTAASEARA), serve as a signal peptide directing secretion. Residues 29–155 (VSTGMPTISA…PSSVEVWGYG (127 aa)) lie on the Extracellular side of the membrane. Asparagine 75, asparagine 85, and asparagine 100 each carry an N-linked (GlcNAc...) asparagine glycan. Residues 127 to 146 (ACSSENQENEENEQTEEGRP) form a disordered region. Residues 156–176 (LLCVTVISLCSLLGASVVPFM) traverse the membrane as a helical segment. Residues 177 to 184 (KKTFYKRL) are Cytoplasmic-facing. Residues 185–205 (LLYFIALAIGTLYSNALFQLI) form a helical membrane-spanning segment. Topologically, residues 206 to 222 (PEAFGFNPMEDYYVSKS) are extracellular. A helical membrane pass occupies residues 223 to 243 (AVVFGGFYLFFFTEKILKMLL). At 244 to 395 (KQKNEHHHGH…LLNAGMSLQQ (152 aa)) the chain is on the cytoplasmic side. The short motif at 249–256 (HHHGHSHY) is the HHHGHXHX-motif element. An XEXPHE-motif motif is present at residues 374 to 379 (EEFPHE). The chain crosses the membrane as a helical span at residues 396-416 (ALFFNFLSACCCYVGLGFGIL). Residues 417 to 422 (AGSHFS) are Extracellular-facing. Residues 423–443 (ANWIFALAGGMFLYISLADMF) form a helical membrane-spanning segment. At 444-459 (PEMNEVSQEDERKGSA) the chain is on the cytoplasmic side. The chain crosses the membrane as a helical span at residues 460-480 (LIPFVIQNLGLLTGFGIMLVL). The Extracellular portion of the chain corresponds to 481–490 (TMYSGHIQIG).

It belongs to the ZIP transporter (TC 2.A.5) family. Homotrimer. Ubiquitinated. Ubiquitination occurs upon iron depletion. The ubiquitinated form undergoes proteasomal degradation. Post-translationally, N-glycosylated. N-glycosylation at Asn-100 is required for iron-regulated extraction of the transporter from membranes and subsequent proteasomal degradation.

The protein localises to the cell membrane. Its subcellular location is the apical cell membrane. It localises to the basolateral cell membrane. The protein resides in the early endosome membrane. It is found in the late endosome membrane. The protein localises to the lysosome membrane. It carries out the reaction Zn(2+)(out) + 2 hydrogencarbonate(out) = Zn(2+)(in) + 2 hydrogencarbonate(in). It catalyses the reaction Mn(2+)(out) + 2 hydrogencarbonate(out) = Mn(2+)(in) + 2 hydrogencarbonate(in). The catalysed reaction is Fe(2+)(out) + 2 hydrogencarbonate(out) = Fe(2+)(in) + 2 hydrogencarbonate(in). The enzyme catalyses Cd(2+)(out) + 2 hydrogencarbonate(out) = Cd(2+)(in) + 2 hydrogencarbonate(in). In terms of biological role, electroneutral transporter of the plasma membrane mediating the cellular uptake of the divalent metal cations zinc, manganese and iron that are important for tissue homeostasis, metabolism, development and immunity. Functions as an energy-dependent symporter, transporting through the membranes an electroneutral complex composed of a divalent metal cation and two bicarbonate anions. Beside these endogenous cellular substrates, can also import cadmium a non-essential metal which is cytotoxic and carcinogenic. This Bos taurus (Bovine) protein is Metal cation symporter ZIP14.